The following is an 863-amino-acid chain: Leucine--tRNA ligase (863 aa).

Positions Pro-40–His-51 match the 'HIGH' region motif. The short motif at Lys-635–Ser-639 is the 'KMSKS' region element. Residue Lys-638 participates in ATP binding.

The protein belongs to the class-I aminoacyl-tRNA synthetase family.

The protein resides in the cytoplasm. It carries out the reaction tRNA(Leu) + L-leucine + ATP = L-leucyl-tRNA(Leu) + AMP + diphosphate. This chain is Leucine--tRNA ligase, found in Leptospira interrogans serogroup Icterohaemorrhagiae serovar copenhageni (strain Fiocruz L1-130).